A 567-amino-acid polypeptide reads, in one-letter code: Dihydroxy-acid dehydratase 1 (567 aa).

A [2Fe-2S] cluster-binding site is contributed by cysteine 57. Aspartate 89 serves as a coordination point for Mg(2+). Cysteine 130 lines the [2Fe-2S] cluster pocket. Mg(2+) contacts are provided by aspartate 131 and lysine 132. Residue lysine 132 is modified to N6-carboxylysine. [2Fe-2S] cluster is bound at residue cysteine 202. Glutamate 454 contributes to the Mg(2+) binding site. The active-site Proton acceptor is serine 480.

The protein belongs to the IlvD/Edd family. In terms of assembly, homodimer. [2Fe-2S] cluster serves as cofactor. Mg(2+) is required as a cofactor.

It carries out the reaction (2R)-2,3-dihydroxy-3-methylbutanoate = 3-methyl-2-oxobutanoate + H2O. It catalyses the reaction (2R,3R)-2,3-dihydroxy-3-methylpentanoate = (S)-3-methyl-2-oxopentanoate + H2O. It participates in amino-acid biosynthesis; L-isoleucine biosynthesis; L-isoleucine from 2-oxobutanoate: step 3/4. It functions in the pathway amino-acid biosynthesis; L-valine biosynthesis; L-valine from pyruvate: step 3/4. Its function is as follows. Functions in the biosynthesis of branched-chain amino acids. Catalyzes the dehydration of (2R,3R)-2,3-dihydroxy-3-methylpentanoate (2,3-dihydroxy-3-methylvalerate) into 2-oxo-3-methylpentanoate (2-oxo-3-methylvalerate) and of (2R)-2,3-dihydroxy-3-methylbutanoate (2,3-dihydroxyisovalerate) into 2-oxo-3-methylbutanoate (2-oxoisovalerate), the penultimate precursor to L-isoleucine and L-valine, respectively. The polypeptide is Dihydroxy-acid dehydratase 1 (Aromatoleum aromaticum (strain DSM 19018 / LMG 30748 / EbN1) (Azoarcus sp. (strain EbN1))).